The following is a 134-amino-acid chain: Cytochrome b5 (134 aa).

Residue Ala2 is modified to N-acetylalanine. N6-acetyllysine occurs at positions 7, 10, and 19. The 77-residue stretch at Val9–His85 folds into the Cytochrome b5 heme-binding domain. The heme site is built by His44 and His68. Residues Trp109–Met131 form a helical membrane-spanning segment.

Belongs to the cytochrome b5 family.

The protein resides in the endoplasmic reticulum membrane. The protein localises to the microsome membrane. Its function is as follows. Cytochrome b5 is a membrane-bound hemoprotein functioning as an electron carrier for several membrane-bound oxygenases. The polypeptide is Cytochrome b5 (CYB5A) (Oryctolagus cuniculus (Rabbit)).